The primary structure comprises 267 residues: Undecaprenyl-diphosphatase (267 aa).

8 consecutive transmembrane segments (helical) span residues 1–21, 39–59, 87–107, 113–133, 144–164, 189–209, 219–239, and 244–264; these read MSEL…FLPI, QGLA…LIYF, WWIL…KSLV, SGYV…WADA, TGLK…IPGT, FLMS…KFIL, LFLG…VFLI, and VGMM…FYIL.

This sequence belongs to the UppP family.

Its subcellular location is the cell inner membrane. The catalysed reaction is di-trans,octa-cis-undecaprenyl diphosphate + H2O = di-trans,octa-cis-undecaprenyl phosphate + phosphate + H(+). In terms of biological role, catalyzes the dephosphorylation of undecaprenyl diphosphate (UPP). Confers resistance to bacitracin. The chain is Undecaprenyl-diphosphatase from Psychromonas ingrahamii (strain DSM 17664 / CCUG 51855 / 37).